A 65-amino-acid chain; its full sequence is Large ribosomal subunit protein bL35 (65 aa).

Residues 1–22 form a disordered region; the sequence is MPKIKTVRGAAKRFKKTGKGGF. Positions 10–22 are enriched in basic residues; that stretch reads AAKRFKKTGKGGF.

The protein belongs to the bacterial ribosomal protein bL35 family.

The chain is Large ribosomal subunit protein bL35 from Klebsiella pneumoniae (strain 342).